Here is a 387-residue protein sequence, read N- to C-terminus: Deoxyguanosinetriphosphate triphosphohydrolase-like protein (387 aa).

The interval 1–26 (MTAPYASDPQRARGRRVKEEESTFRS) is disordered. The segment covering 17–26 (VKEEESTFRS) has biased composition (basic and acidic residues). One can recognise an HD domain in the interval 62–198 (RLTHSIEVAQ…AAIADDVAYN (137 aa)).

Belongs to the dGTPase family. Type 2 subfamily.

In Roseobacter denitrificans (strain ATCC 33942 / OCh 114) (Erythrobacter sp. (strain OCh 114)), this protein is Deoxyguanosinetriphosphate triphosphohydrolase-like protein.